A 383-amino-acid chain; its full sequence is Schlafen-like protein 3 (383 aa).

Residues 118–266 (FDYQSNFSDV…SDKVYQISSG (149 aa)) are SLFN-like fold. Residues 354-374 (LLDIQNIGWIFFGTALSFCIY) form a helical membrane-spanning segment.

The protein belongs to the Schlafen family. In terms of assembly, component of the PUCH (precursor of 21U RNA 5'-end cleavage holoenzyme) complex; consisting of tofu-1, tofu-2 and either slfl-3 or slfl-4. Within the complex, interacts (via N-terminus) with tofu-2 (via N-terminus); the presence of tofu-1 is required for the interaction.

The protein resides in the mitochondrion membrane. Functionally, component of the trimeric PUCH (precursor of 21U RNA 5'-end cleavage holoenzyme) complex, that acts as an endoribonuclease processing the 5'-end of precursor Piwi-interacting RNAs (piRNAs). The PUCH complex consists of tofu-1, tofu-2 and either slfl-3 or slfl-4, where tofu-2 exhibits endoribonuclease activity. PUCH-mediated processing strictly requires a 7-methyl-G cap (m7 G-cap) and an uracil at position three (U3). PUCH also exhibits a strict bias for piRNA precursors with an A or G at position 1. Mature piRNA production is enhanced by the interaction of PUCH with the PETISCO complex, which is stabilizing piRNA precursors and allows their processing by PUCH. This is Schlafen-like protein 3 from Caenorhabditis elegans.